A 342-amino-acid chain; its full sequence is Phosphoribosylformylglycinamidine cyclo-ligase (342 aa).

This sequence belongs to the AIR synthase family.

The protein localises to the cytoplasm. It carries out the reaction 2-formamido-N(1)-(5-O-phospho-beta-D-ribosyl)acetamidine + ATP = 5-amino-1-(5-phospho-beta-D-ribosyl)imidazole + ADP + phosphate + H(+). It functions in the pathway purine metabolism; IMP biosynthesis via de novo pathway; 5-amino-1-(5-phospho-D-ribosyl)imidazole from N(2)-formyl-N(1)-(5-phospho-D-ribosyl)glycinamide: step 2/2. In Staphylococcus aureus (strain USA300), this protein is Phosphoribosylformylglycinamidine cyclo-ligase.